A 341-amino-acid polypeptide reads, in one-letter code: Undecaprenyl-phosphate 4-deoxy-4-formamido-L-arabinose transferase (341 aa).

2 consecutive transmembrane segments (helical) span residues 235–255 (LSIVGFSLAALGMLFAFALIV) and 269–289 (LFVLFAVLFVFTGGQFIGMGL).

This sequence belongs to the glycosyltransferase 2 family.

It is found in the cell inner membrane. The catalysed reaction is UDP-4-deoxy-4-formamido-beta-L-arabinose + di-trans,octa-cis-undecaprenyl phosphate = 4-deoxy-4-formamido-alpha-L-arabinopyranosyl di-trans,octa-cis-undecaprenyl phosphate + UDP. Its pathway is glycolipid biosynthesis; 4-amino-4-deoxy-alpha-L-arabinose undecaprenyl phosphate biosynthesis; 4-amino-4-deoxy-alpha-L-arabinose undecaprenyl phosphate from UDP-4-deoxy-4-formamido-beta-L-arabinose and undecaprenyl phosphate: step 1/2. It participates in bacterial outer membrane biogenesis; lipopolysaccharide biosynthesis. Functionally, catalyzes the transfer of 4-deoxy-4-formamido-L-arabinose from UDP to undecaprenyl phosphate. The modified arabinose is attached to lipid A and is required for resistance to polymyxin and cationic antimicrobial peptides. The polypeptide is Undecaprenyl-phosphate 4-deoxy-4-formamido-L-arabinose transferase (Pseudomonas fluorescens (strain SBW25)).